The sequence spans 507 residues: Ribose import ATP-binding protein RbsA (507 aa).

ABC transporter domains lie at 7–242 (LEMR…VGRP) and 253–497 (IPLG…TGVT). 39–46 (GENGAGKS) provides a ligand contact to ATP.

Belongs to the ABC transporter superfamily. Ribose importer (TC 3.A.1.2.1) family. In terms of assembly, the complex is composed of an ATP-binding protein (RbsA), two transmembrane proteins (RbsC) and a solute-binding protein (RbsB).

The protein localises to the cell inner membrane. The enzyme catalyses D-ribose(out) + ATP + H2O = D-ribose(in) + ADP + phosphate + H(+). In terms of biological role, part of the ABC transporter complex RbsABC involved in ribose import. Responsible for energy coupling to the transport system. The sequence is that of Ribose import ATP-binding protein RbsA from Yersinia pestis bv. Antiqua (strain Antiqua).